The following is a 102-amino-acid chain: Urease subunit beta (102 aa).

This sequence belongs to the urease beta subunit family. As to quaternary structure, heterotrimer of UreA (gamma), UreB (beta) and UreC (alpha) subunits. Three heterotrimers associate to form the active enzyme.

The protein localises to the cytoplasm. It catalyses the reaction urea + 2 H2O + H(+) = hydrogencarbonate + 2 NH4(+). It functions in the pathway nitrogen metabolism; urea degradation; CO(2) and NH(3) from urea (urease route): step 1/1. This Pseudomonas syringae pv. tomato (strain ATCC BAA-871 / DC3000) protein is Urease subunit beta.